A 38-amino-acid chain; its full sequence is Toxin Bcg III 31.16 (38 aa).

Cystine bridges form between Cys4-Cys37, Cys6-Cys30, and Cys20-Cys38.

It belongs to the sea anemone type 3 (BDS) potassium channel toxin family.

It is found in the secreted. The protein resides in the nematocyst. Possible modulator of crustacean voltage-gated sodium channels (Nav). This Bunodosoma cangicum (Sea anemone) protein is Toxin Bcg III 31.16.